We begin with the raw amino-acid sequence, 483 residues long: 1-aminocyclopropane-1-carboxylate synthase 2 (483 aa).

Residue K275 is modified to N6-(pyridoxal phosphate)lysine.

This sequence belongs to the class-I pyridoxal-phosphate-dependent aminotransferase family. It depends on pyridoxal 5'-phosphate as a cofactor.

It catalyses the reaction S-adenosyl-L-methionine = 1-aminocyclopropane-1-carboxylate + S-methyl-5'-thioadenosine + H(+). It participates in alkene biosynthesis; ethylene biosynthesis via S-adenosyl-L-methionine; ethylene from S-adenosyl-L-methionine: step 1/2. Catalyzes the formation of 1-aminocyclopropane-1-carboxylate, a direct precursor of ethylene in higher plants. Involved in defense response by producing ethylene after pathogen infection. Involved in several phosphate deficiency-induced adaptive responses, such as lateral root elongation. The polypeptide is 1-aminocyclopropane-1-carboxylate synthase 2 (Oryza sativa subsp. japonica (Rice)).